We begin with the raw amino-acid sequence, 369 residues long: Phenylalanine--tRNA ligase alpha subunit (369 aa).

Position 269 (Glu-269) interacts with Mg(2+).

This sequence belongs to the class-II aminoacyl-tRNA synthetase family. Phe-tRNA synthetase alpha subunit type 1 subfamily. As to quaternary structure, tetramer of two alpha and two beta subunits. The cofactor is Mg(2+).

Its subcellular location is the cytoplasm. The catalysed reaction is tRNA(Phe) + L-phenylalanine + ATP = L-phenylalanyl-tRNA(Phe) + AMP + diphosphate + H(+). This chain is Phenylalanine--tRNA ligase alpha subunit, found in Nitrobacter winogradskyi (strain ATCC 25391 / DSM 10237 / CIP 104748 / NCIMB 11846 / Nb-255).